A 268-amino-acid polypeptide reads, in one-letter code: Regulatory protein zeste (268 aa).

The DNA-binding element occupies 1 to 72 (TAEEKEVLYT…WLNSRLRKQY (72 aa)). The span at 94-108 (VSVASAVPQQQQQQH) shows a compositional bias: low complexity. A disordered region spans residues 94 to 133 (VSVASAVPQQQQQQHHQQHDNVKEEPEYQISPDASEHNPQ). Over residues 110-119 (QQHDNVKEEP) the composition is skewed to basic and acidic residues.

In terms of assembly, self-associates forming complexes of several hundred monomers.

The protein localises to the nucleus. Involved in transvection phenomena (= synapsis-dependent gene expression), where the synaptic pairing of chromosomes carrying genes with which zeste interacts influences the expression of these genes. Zeste binds to DNA and stimulates transcription from a nearby promoter. This is Regulatory protein zeste (z) from Drosophila sechellia (Fruit fly).